A 713-amino-acid polypeptide reads, in one-letter code: NAD(+) hydrolase SARM1 (713 aa).

The stretch at 53-96 is one ARM 1 repeat; sequence DVQAVLDGSLPALRSAIRTLRSSKDTGDLEETRRAIAETFQLVE. Residues Trp-99, Arg-106, 145–153, and 186–189 each bind NAD(+); these read EQILVSENR and HMFK. ARM repeat units lie at residues 110–149, 151–189, 192–231, 233–276, 277–310, 311–350, and 355–398; these read EEIC…QILV, ENRD…HMFK, EETS…NCAM, GGHR…LAAN, REME…NMLD, SADS…VETS, and QRNT…EEVP. SAM domains lie at 408-472 and 478-537; these read WKSG…LKTY and CDPN…ILSA. The TIR domain maps to 552–695; it reads KGPDVFISYR…KILRFLEGCP (144 aa). NAD(+)-binding positions include 561-562 and Glu-591; that span reads RR. Residue Glu-634 is part of the active site.

Belongs to the SARM1 family. In terms of assembly, homooctamer; forms an octameric ring via SAM domains.

It is found in the cytoplasm. The protein localises to the cell projection. It localises to the axon. The protein resides in the dendrite. Its subcellular location is the synapse. It is found in the mitochondrion. The catalysed reaction is NAD(+) + H2O = ADP-D-ribose + nicotinamide + H(+). The enzyme catalyses NAD(+) = cyclic ADP-beta-D-ribose + nicotinamide + H(+). It carries out the reaction NADP(+) + H2O = ADP-D-ribose 2'-phosphate + nicotinamide + H(+). Autoinhibited: in the inactive state, the enzymatic TIR domain is held apart by the autoinhibiting ARM repeats. NAD(+)-binding to ARM repeats maintains an inactive state by promoting interaction between ARM repeats and the TIR domain, thereby facilitating inhibition of the enzymatic TIR domain. Following activation, possibly by nicotinamide mononucleotide (NMN), auto-inhibitory interactions are released, allowing self-association of the TIR domains and subsequent activation of the NAD(+) hydrolase (NADase) activity. Self-association of TIR domains is facilitated by the octamer of SAM domains. Its function is as follows. NAD(+) hydrolase, which plays a key role in axonal degeneration following injury by regulating NAD(+) metabolism. Acts as a negative regulator of MYD88- and TRIF-dependent toll-like receptor signaling pathway by promoting Wallerian degeneration, an injury-induced form of programmed subcellular death which involves degeneration of an axon distal to the injury site. Wallerian degeneration is triggerred by NAD(+) depletion: in response to injury, SARM1 is activated and catalyzes cleavage of NAD(+) into ADP-D-ribose (ADPR), cyclic ADPR (cADPR) and nicotinamide; NAD(+) cleavage promoting cytoskeletal degradation and axon destruction. Also able to hydrolyze NADP(+), but not other NAD(+)-related molecules. Can activate neuronal cell death in response to stress. This Danio rerio (Zebrafish) protein is NAD(+) hydrolase SARM1.